Consider the following 283-residue polypeptide: Putative Ig-like domain-containing protein ORF10 (283 aa).

Residues 1-55 (MIDKRNKKAVTHISTCLCHSSIPIYGDSPFLNTHRAAMDPRPLVLLLLLASHIST) form the signal peptide. N-linked (GlcNAc...) asparagine; by host glycans are attached at residues Asn-75, Asn-92, Asn-121, Asn-157, Asn-179, Asn-198, Asn-223, and Asn-229. In terms of domain architecture, Ig-like spans 129–227 (QPLGQSIHHA…IDQQTNLTLT (99 aa)).

This chain is Putative Ig-like domain-containing protein ORF10, found in Galliformes (FAdV-1).